The following is a 371-amino-acid chain: Cytochrome b (371 aa).

The next 4 membrane-spanning stretches (helical) occupy residues 25 to 45 (FGSMLLACSSMQVLTGFFLAV), 69 to 90 (WMMQNLHAIGASMFFICIYIHI), 105 to 125 (WLSGTTLLIMLMATAXXXXXX), and 170 to 190 (XXXXXXILPFGIISLSSLHIM). 2 residues coordinate heme b: His75 and His89. Residues Xaa174 and His188 each coordinate heme b. His193 is an a ubiquinone binding site. Transmembrane regions (helical) follow at residues 218 to 238 (YKDLLMLSLMVLTLLMTVSFL), 280 to 300 (LGGALALAMSIMILLTTPFTH), 312 to 332 (IMQLMFWTLVATFVVITWAAT), and 339 to 358 (FTMISQVASTMYFLFFITNP).

This sequence belongs to the cytochrome b family. As to quaternary structure, the cytochrome bc1 complex contains 3 respiratory subunits (MT-CYB, CYC1 and UQCRFS1), 2 core proteins (UQCRC1 and UQCRC2) and probably 6 low-molecular weight proteins. The cofactor is heme b.

Its subcellular location is the mitochondrion inner membrane. Component of the ubiquinol-cytochrome c reductase complex (complex III or cytochrome b-c1 complex) that is part of the mitochondrial respiratory chain. The b-c1 complex mediates electron transfer from ubiquinol to cytochrome c. Contributes to the generation of a proton gradient across the mitochondrial membrane that is then used for ATP synthesis. The protein is Cytochrome b (MT-CYB) of Eryx jaculus (Javelin sand boa).